The following is a 490-amino-acid chain: Protein U94 (490 aa).

The PV NS1-Nuc domain maps to 1 to 210; that stretch reads MFSIINPSDD…SHFNKKPNVK (210 aa). The region spanning 312–463 is the SF3 helicase domain; that stretch reads DPILAGTILY…IPRNFPVIQK (152 aa). Position 338 to 345 (338 to 345) interacts with ATP; sequence GPPGCGKS.

The protein localises to the host nucleus. The sequence is that of Protein U94 (U94) from Human herpesvirus 6B (HHV-6 variant B).